We begin with the raw amino-acid sequence, 525 residues long: GMP synthase [glutamine-hydrolyzing] (525 aa).

One can recognise a Glutamine amidotransferase type-1 domain in the interval 8–207 (KILILDFGSQ…ALDICGCAAN (200 aa)). Cys-85 functions as the Nucleophile in the catalytic mechanism. Catalysis depends on residues His-181 and Glu-183. A GMPS ATP-PPase domain is found at 208-400 (WKPSSIIEDA…LGLPYNMLYR (193 aa)). An ATP-binding site is contributed by 235-241 (SGGVDSS).

Homodimer.

The enzyme catalyses XMP + L-glutamine + ATP + H2O = GMP + L-glutamate + AMP + diphosphate + 2 H(+). It participates in purine metabolism; GMP biosynthesis; GMP from XMP (L-Gln route): step 1/1. Catalyzes the synthesis of GMP from XMP. The protein is GMP synthase [glutamine-hydrolyzing] of Shewanella sp. (strain ANA-3).